A 242-amino-acid chain; its full sequence is Protein HTATIP2 (242 aa).

Ala-2 carries the N-acetylalanine modification. The segment at 2–25 (ADKETLLKLREDFKMQNKSVFILG) is required for interaction with elongation factor EEF1A1. NADPH-binding residues include Ser-27, Gly-28, Glu-29, Thr-30, Arg-52, Arg-53, Leu-92, Gly-93, Tyr-143, Lys-147, Leu-170, and Arg-178. The active-site Proton acceptor is the Tyr-143. The active site involves Lys-147.

As to quaternary structure, monomer. Forms homodimers during oxidative stress. Interacts (via N-terminus) with elongation factor EEF1A1 (via middle-region); the interaction is direct and competes with EEF1A1 binding to guanyl-nucleotide exchange factor EEF1B2, thereby inhibiting GDP for GTP exchange and reactivation of EEF1A1. Interacts with nuclear transport receptors XPO4, IPO5/RANBP5, IPO7, IPO9 and KPNB1 as well as GCN1L1/GCN1 and LRPPRC probably through their HEAT repeats. Binds NCOA5/CIA.

Its function is as follows. Represses translation by preventing reactivation of elongation factor eEF1A. May also inhibit nuclear import by competing with nuclear import substrates for binding to a subset of nuclear transport receptors. Has additionally been proposed to act as a redox sensor involved in cellular oxidative stress surveillance. May bind NADPH. The sequence is that of Protein HTATIP2 from Rattus norvegicus (Rat).